A 152-amino-acid chain; its full sequence is MEEDEVAESWEEAADSGEIERRLEKKLKISQRENNNTKSPPRAPVVIQDDSLPSGPPPQIRILKRPTSNGLASSPHACSRPAAPVKSLAQREAEYAEARKRILGSASPEEEQEKPVAERPARINQVEEIRQQNNVIRQPLGPDGSQGFRQGR.

Residues K28–R152 form a disordered region. The SUZ domain occupies R42–S107. Composition is skewed to basic and acidic residues over residues A89–K100 and E113–R130. In terms of domain architecture, SUZ-C spans E111 to R152.

Belongs to the SZRD1 family.

The chain is SUZ RNA-binding domain-containing (szrd1) from Xenopus laevis (African clawed frog).